A 450-amino-acid polypeptide reads, in one-letter code: UDP-N-acetylmuramoylalanine--D-glutamate ligase (450 aa).

Residue 119-125 (GSNGKTT) participates in ATP binding.

It belongs to the MurCDEF family.

It is found in the cytoplasm. The catalysed reaction is UDP-N-acetyl-alpha-D-muramoyl-L-alanine + D-glutamate + ATP = UDP-N-acetyl-alpha-D-muramoyl-L-alanyl-D-glutamate + ADP + phosphate + H(+). It participates in cell wall biogenesis; peptidoglycan biosynthesis. Functionally, cell wall formation. Catalyzes the addition of glutamate to the nucleotide precursor UDP-N-acetylmuramoyl-L-alanine (UMA). The polypeptide is UDP-N-acetylmuramoylalanine--D-glutamate ligase (Streptococcus gordonii (strain Challis / ATCC 35105 / BCRC 15272 / CH1 / DL1 / V288)).